We begin with the raw amino-acid sequence, 531 residues long: Transmembrane protein 266 (531 aa).

At 1-102 the chain is on the cytoplasmic side; sequence MALAASFNMT…VFLLSASLNS (102 aa). The chain crosses the membrane as a helical span at residues 103–123; the sequence is FLVACVILVVILLTLELLIDI. The Extracellular portion of the chain corresponds to 124–129; sequence KLLQFS. A helical transmembrane segment spans residues 130–150; it reads SAFQFAGVIHWISLVILSVFF. At 151 to 169 the chain is on the cytoplasmic side; that stretch reads SETVLRIVVLGIWDYIENK. A helical membrane pass occupies residues 170 to 190; sequence IEVFDGAVIILSLAPMVASTV. Topologically, residues 191-199 are extracellular; it reads ANGPRSPWD. A helical transmembrane segment spans residues 200–220; it reads AISLIIMLRIWRVKRVIDAYV. The Cytoplasmic portion of the chain corresponds to 221-531; that stretch reads LPVKLEMEMV…EQKLHRVPEA (311 aa). The stretch at 231–251 forms a coiled coil; sequence IQQYEKAKVIQDEQLERLTQI. Residues 380–477 are disordered; that stretch reads NGTGATSESA…PAGSAQTSPE (98 aa). A compositionally biased stretch (polar residues) spans 383–412; it reads GATSESASRSSVTRAQSDSSQTLGSSTDCS. A compositionally biased stretch (pro residues) spans 421–431; the sequence is EPGPSPLPLPP.

As to quaternary structure, homodimer; disulfide-linked.

It is found in the cell membrane. Its subcellular location is the cell projection. The protein localises to the dendrite. It localises to the perikaryon. Voltage-sensor protein present on the post-synaptic side of glutamatergic mossy fibers and granule cells in the cerebellum. Despite the presence of a voltage-sensor segment, does not form a functional ion channel and its precise role remains unclear. Undergoes both rapid and slow structural rearrangements in response to changes in voltage. Contains a zinc-binding site that can regulate the slow conformational transition. The chain is Transmembrane protein 266 from Macaca fascicularis (Crab-eating macaque).